A 31-amino-acid polypeptide reads, in one-letter code: Morintide mO3 (31 aa).

Positions 1–30 (NRLCCSQYGFCGTTSEYCSRANGCQSNCWG) constitute a Chitin-binding type-1 domain. 2 disulfides stabilise this stretch: cysteine 4–cysteine 18 and cysteine 24–cysteine 28.

As to expression, seeds (at protein level).

Functionally, chitin-binding protein which functions in defense against chitin-containing fungal pathogens. The chain is Morintide mO3 from Moringa oleifera (Horseradish tree).